The primary structure comprises 67 residues: Small ribosomal subunit protein bS21 (67 aa).

The protein belongs to the bacterial ribosomal protein bS21 family.

The protein is Small ribosomal subunit protein bS21 of Magnetococcus marinus (strain ATCC BAA-1437 / JCM 17883 / MC-1).